The following is a 182-amino-acid chain: ADP-ribosylation factor-like protein 3 (182 aa).

A lipid anchor (N-myristoyl glycine) is attached at glycine 2. GTP contacts are provided by residues 24–31, 67–71, and 126–129; these read GLDNAGKT, DIGGQ, and NKQD.

The protein belongs to the small GTPase superfamily. Arf family.

The protein localises to the golgi apparatus membrane. It localises to the cytoplasm. Its subcellular location is the cytoskeleton. It is found in the spindle. The protein resides in the nucleus. The protein localises to the microtubule organizing center. It localises to the centrosome. Its subcellular location is the cell projection. It is found in the cilium. In terms of biological role, small GTP-binding protein which cycles between an inactive GDP-bound and an active GTP-bound form, and the rate of cycling is regulated by guanine nucleotide exchange factors (GEF) and GTPase-activating proteins (GAP). Required for normal cytokinesis and cilia signaling. Required for targeting proteins to the ciliary membrane by releasing myristoylated protein from unc119 cargo adapters into the cilium. This is ADP-ribosylation factor-like protein 3 (ARL3) from Taeniopygia guttata (Zebra finch).